The following is a 407-amino-acid chain: Phosphopentomutase (407 aa).

Residues aspartate 10, aspartate 306, histidine 311, aspartate 347, histidine 348, and histidine 359 each contribute to the Mn(2+) site.

The protein belongs to the phosphopentomutase family. The cofactor is Mn(2+).

It is found in the cytoplasm. It carries out the reaction 2-deoxy-alpha-D-ribose 1-phosphate = 2-deoxy-D-ribose 5-phosphate. The enzyme catalyses alpha-D-ribose 1-phosphate = D-ribose 5-phosphate. It functions in the pathway carbohydrate degradation; 2-deoxy-D-ribose 1-phosphate degradation; D-glyceraldehyde 3-phosphate and acetaldehyde from 2-deoxy-alpha-D-ribose 1-phosphate: step 1/2. Its function is as follows. Isomerase that catalyzes the conversion of deoxy-ribose 1-phosphate (dRib-1-P) and ribose 1-phosphate (Rib-1-P) to deoxy-ribose 5-phosphate (dRib-5-P) and ribose 5-phosphate (Rib-5-P), respectively. This is Phosphopentomutase from Yersinia pseudotuberculosis serotype O:1b (strain IP 31758).